A 631-amino-acid polypeptide reads, in one-letter code: E3 ubiquitin-protein ligase Zswim2 (631 aa).

The segment at Phe-54–Phe-87 adopts an SWIM-type zinc-finger fold. The tract at residues Lys-139–Leu-348 is UBE2D1-binding. Residues Cys-147–Arg-199 form an RING-type 1 zinc finger. Residues His-230–Gln-281 form a ZZ-type zinc finger. Zn(2+)-binding residues include Cys-235, Cys-238, Cys-250, Cys-253, Cys-259, Cys-262, His-268, and His-271. Residues Cys-344–Arg-386 form an RING-type 2 zinc finger. The tract at residues Ser-589–Pro-614 is disordered. A compositionally biased stretch (basic residues) spans Val-599 to Arg-608.

Dimer. Interacts with UBE2D1. Post-translationally, polyubiquitinated. Polyubiquitination is followed by degradation via the proteasome. In terms of tissue distribution, expressed only in testis.

The enzyme catalyses S-ubiquitinyl-[E2 ubiquitin-conjugating enzyme]-L-cysteine + [acceptor protein]-L-lysine = [E2 ubiquitin-conjugating enzyme]-L-cysteine + N(6)-ubiquitinyl-[acceptor protein]-L-lysine.. Its function is as follows. E3 ubiquitin-protein ligase involved in the regulation of Fas-, DR3- and DR4-mediated apoptosis. Functions in conjunction with the UBE2D1, UBE2D3 and UBE2E1 E2 ubiquitin-conjugating enzymes. The polypeptide is E3 ubiquitin-protein ligase Zswim2 (Zswim2) (Mus musculus (Mouse)).